Consider the following 237-residue polypeptide: Urease accessory protein UreF (237 aa).

Belongs to the UreF family. UreD, UreF and UreG form a complex that acts as a GTP-hydrolysis-dependent molecular chaperone, activating the urease apoprotein by helping to assemble the nickel containing metallocenter of UreC. The UreE protein probably delivers the nickel.

Its subcellular location is the cytoplasm. Required for maturation of urease via the functional incorporation of the urease nickel metallocenter. The protein is Urease accessory protein UreF of Rhodopseudomonas palustris (strain HaA2).